The following is a 288-amino-acid chain: Rhox homeobox family member 2B (288 aa).

The tract at residues 16–136 (SPAVDDEKEL…GLEPGNAQQP (121 aa)) is disordered. The span at 39–48 (VKEEEEDAQP) shows a compositional bias: acidic residues. Residues 68 to 80 (GEEKDGGGEEKDG) are compositionally biased toward basic and acidic residues. The segment at residues 134–193 (QQPNVHAFTPLQLQELECIFQREQFPSEFLRRRLARSMNVTELAVQIWFENRRAKWRRHQ) is a DNA-binding region (homeobox). The Nuclear localization signal motif lies at 186-195 (RAKWRRHQRA).

This sequence belongs to the paired-like homeobox family. PEPP subfamily. As to expression, expressed in testis, mainly expressed in germ cells, but also detected in somatic cells such as Sertoli cells, Leydig cells and peritubular cells.

The protein localises to the nucleus. In terms of biological role, transcription factor maybe involved in reproductive processes. Modulates expression of target genes encoding proteins involved in processes relevant to spermatogenesis. This is Rhox homeobox family member 2B from Homo sapiens (Human).